Here is a 281-residue protein sequence, read N- to C-terminus: Bifunctional protein FolD (281 aa).

Residues 167–169 (GRS) and serine 192 each bind NADP(+).

This sequence belongs to the tetrahydrofolate dehydrogenase/cyclohydrolase family. In terms of assembly, homodimer.

It catalyses the reaction (6R)-5,10-methylene-5,6,7,8-tetrahydrofolate + NADP(+) = (6R)-5,10-methenyltetrahydrofolate + NADPH. The catalysed reaction is (6R)-5,10-methenyltetrahydrofolate + H2O = (6R)-10-formyltetrahydrofolate + H(+). It functions in the pathway one-carbon metabolism; tetrahydrofolate interconversion. Functionally, catalyzes the oxidation of 5,10-methylenetetrahydrofolate to 5,10-methenyltetrahydrofolate and then the hydrolysis of 5,10-methenyltetrahydrofolate to 10-formyltetrahydrofolate. This chain is Bifunctional protein FolD, found in Alcanivorax borkumensis (strain ATCC 700651 / DSM 11573 / NCIMB 13689 / SK2).